The following is a 358-amino-acid chain: UDP-N-acetylglucosamine--N-acetylmuramyl-(pentapeptide) pyrophosphoryl-undecaprenol N-acetylglucosamine transferase (358 aa).

UDP-N-acetyl-alpha-D-glucosamine is bound by residues 10 to 12, asparagine 124, arginine 165, serine 191, isoleucine 246, and glutamine 291; that span reads TGG.

It belongs to the glycosyltransferase 28 family. MurG subfamily.

Its subcellular location is the cell inner membrane. The catalysed reaction is di-trans,octa-cis-undecaprenyl diphospho-N-acetyl-alpha-D-muramoyl-L-alanyl-D-glutamyl-meso-2,6-diaminopimeloyl-D-alanyl-D-alanine + UDP-N-acetyl-alpha-D-glucosamine = di-trans,octa-cis-undecaprenyl diphospho-[N-acetyl-alpha-D-glucosaminyl-(1-&gt;4)]-N-acetyl-alpha-D-muramoyl-L-alanyl-D-glutamyl-meso-2,6-diaminopimeloyl-D-alanyl-D-alanine + UDP + H(+). The protein operates within cell wall biogenesis; peptidoglycan biosynthesis. Its function is as follows. Cell wall formation. Catalyzes the transfer of a GlcNAc subunit on undecaprenyl-pyrophosphoryl-MurNAc-pentapeptide (lipid intermediate I) to form undecaprenyl-pyrophosphoryl-MurNAc-(pentapeptide)GlcNAc (lipid intermediate II). This is UDP-N-acetylglucosamine--N-acetylmuramyl-(pentapeptide) pyrophosphoryl-undecaprenol N-acetylglucosamine transferase from Citrifermentans bemidjiense (strain ATCC BAA-1014 / DSM 16622 / JCM 12645 / Bem) (Geobacter bemidjiensis).